The primary structure comprises 430 residues: Sesquiterpene synthase 15 (430 aa).

D182, D186, and E335 together coordinate Mg(2+). The short motif at 182–186 is the DDXXD motif element; that stretch reads DDIYD.

This sequence belongs to the terpene synthase family. Tpsa subfamily. The cofactor is Mg(2+). It depends on Mn(2+) as a cofactor.

The protein operates within secondary metabolite biosynthesis; terpenoid biosynthesis. Its function is as follows. Sesquiterpene synthase involved in the biosynthesis of volatile compounds. No activity detected with geranyl diphosphate (GPP) and farnesyl diphosphate (FPP) as substrates. The protein is Sesquiterpene synthase 15 of Solanum lycopersicum (Tomato).